We begin with the raw amino-acid sequence, 172 residues long: Translationally-controlled tumor protein homolog (172 aa).

The TCTP domain maps to 1-172 (MIIYKDTVTE…FKDGLISEKC (172 aa)).

Belongs to the TCTP family.

It is found in the cytoplasm. In terms of biological role, involved in calcium binding and microtubule stabilization. This chain is Translationally-controlled tumor protein homolog (tpt1), found in Xenopus tropicalis (Western clawed frog).